Reading from the N-terminus, the 729-residue chain is Transketolase (729 aa).

H97 contacts substrate. Thiamine diphosphate is bound by residues H138 and 186–188 (GPL). Mg(2+) is bound at residue D227. 2 residues coordinate thiamine diphosphate: G228 and N257. 2 residues coordinate Mg(2+): N257 and I259. Positions 332, 423, and 450 each coordinate substrate. H332 serves as a coordination point for thiamine diphosphate. The active-site Proton donor is E477. F503 is a thiamine diphosphate binding site. Residues H527, D535, and R586 each contribute to the substrate site.

The protein belongs to the transketolase family. In terms of assembly, homodimer. Requires Mg(2+) as cofactor. The cofactor is Ca(2+). Mn(2+) is required as a cofactor. It depends on Co(2+) as a cofactor. Thiamine diphosphate serves as cofactor.

The enzyme catalyses D-sedoheptulose 7-phosphate + D-glyceraldehyde 3-phosphate = aldehydo-D-ribose 5-phosphate + D-xylulose 5-phosphate. Functionally, catalyzes the transfer of a two-carbon ketol group from a ketose donor to an aldose acceptor, via a covalent intermediate with the cofactor thiamine pyrophosphate. This chain is Transketolase, found in Streptococcus pyogenes serotype M6 (strain ATCC BAA-946 / MGAS10394).